The chain runs to 1098 residues: Protein diaphanous homolog 2 (1098 aa).

Met1 carries the N-acetylmethionine modification. Residues 1–62 (MEELGAAASG…SFRKSATKRE (62 aa)) form a disordered region. Over residues 36–52 (ANEEETRNKPKLRDRIT) the composition is skewed to basic and acidic residues. Residues 90-463 (SLILSEKEVL…QIVLHCSGMD (374 aa)) form the GBD/FH3 domain. 2 coiled-coil regions span residues 375–416 (QLRV…NMLK) and 490–539 (EENE…GQGV). 5 disordered regions span residues 537-565 (QGVP…PPPP), 578-611 (PPPP…GVFP), 679-699 (MKGQ…PKKK), 1007-1047 (HKRK…NKEG), and 1063-1098 (GAAF…MSSK). Pro residues-rich tracts occupy residues 543 to 565 (IPGP…PPPP) and 578 to 608 (PPPP…PPGG). Residues 544–620 (PGPPPPPPLP…PLLSGPIELP (77 aa)) form the FH1 domain. Residues 625–1025 (QKKLYKPDIP…SRRAKLAKEK (401 aa)) form the FH2 domain. A coiled-coil region spans residues 999–1050 (FLEALKENHKRKEMEEKSRRAKLAKEKAEQEKLERQKKKKQLIDINKEGDET). Basic and acidic residues-rich tracts occupy residues 1007-1032 (HKRK…EKLE) and 1075-1087 (RNPD…LERS). One can recognise a DAD domain in the interval 1048–1078 (DETGVMDNLLEALQSGAAFRDRRKRIPRNPD).

This sequence belongs to the formin homology family. Diaphanous subfamily. Interacts with MAPRE1 and APC.

Functionally, may be involved in oogenesis. This chain is Protein diaphanous homolog 2 (Diaph2), found in Mus musculus (Mouse).